The primary structure comprises 190 residues: MRKLEERIMKDGLVLPGNILKVDRFINHMIDPVLFEDLANEFYEKFKDKKINKILTIEVSGIAIAYACGIRFNCPVVFAKKTSSKTLGDNCYRTEVFSFTKNRSYEVMVSKEYLDEKDHVLLIDDFLANGKALEGLIDICSQANATVEGIGILIEKVFQKGGENLRRQGYTIESLARIKGFTDDSVIFED.

Xanthine is bound by residues Leu20 and Asn27. Position 128–132 (128–132 (ANGKA)) interacts with 5-phospho-alpha-D-ribose 1-diphosphate. Lys156 contributes to the xanthine binding site.

The protein belongs to the purine/pyrimidine phosphoribosyltransferase family. Xpt subfamily. Homodimer.

The protein localises to the cytoplasm. It carries out the reaction XMP + diphosphate = xanthine + 5-phospho-alpha-D-ribose 1-diphosphate. The protein operates within purine metabolism; XMP biosynthesis via salvage pathway; XMP from xanthine: step 1/1. Converts the preformed base xanthine, a product of nucleic acid breakdown, to xanthosine 5'-monophosphate (XMP), so it can be reused for RNA or DNA synthesis. This is Xanthine phosphoribosyltransferase from Finegoldia magna (strain ATCC 29328 / DSM 20472 / WAL 2508) (Peptostreptococcus magnus).